A 255-amino-acid chain; its full sequence is Probable transcriptional regulatory protein PCC8801_2028 (255 aa).

Belongs to the TACO1 family.

Its subcellular location is the cytoplasm. The sequence is that of Probable transcriptional regulatory protein PCC8801_2028 from Rippkaea orientalis (strain PCC 8801 / RF-1) (Cyanothece sp. (strain PCC 8801)).